Here is a 150-residue protein sequence, read N- to C-terminus: Flagellar assembly factor FliW (150 aa).

Belongs to the FliW family. Interacts with translational regulator CsrA. Interacts with flagellins FlaB1, FlaB2 and FlaB3.

It is found in the cytoplasm. In terms of biological role, acts as an anti-CsrA protein, binds CsrA and prevents it from repressing translation of its target genes, one of which is flagellin. Binds to flagellin and participates in the assembly of the flagellum. Binds to the C-terminal region of flagellin, which is implicated in polymerization, and participates in the assembly of the flagellum. The chain is Flagellar assembly factor FliW from Treponema pallidum (strain Nichols).